Here is a 182-residue protein sequence, read N- to C-terminus: Large ribosomal subunit protein uL10 (182 aa).

Belongs to the universal ribosomal protein uL10 family. In terms of assembly, part of the ribosomal stalk of the 50S ribosomal subunit. The N-terminus interacts with L11 and the large rRNA to form the base of the stalk. The C-terminus forms an elongated spine to which L12 dimers bind in a sequential fashion forming a multimeric L10(L12)X complex.

Its function is as follows. Forms part of the ribosomal stalk, playing a central role in the interaction of the ribosome with GTP-bound translation factors. This Herminiimonas arsenicoxydans protein is Large ribosomal subunit protein uL10.